Here is a 666-residue protein sequence, read N- to C-terminus: Probable potassium transport system protein Kup (666 aa).

12 consecutive transmembrane segments (helical) span residues 16–36 (GFIIALGIVYGDIGTSPLYTM), 58–78 (ISLIIWTLTLITTIKYVLIAL), 100–120 (PWLIIPAMIGGATLLSDGALT), 141–161 (IYQNQTNVIITTLVILIVLFG), 165–185 (FGTGFIGKIFGPVMFIWFSFL), 221–241 (IFILGSIFLATTGAEALYSDL), 253–273 (WPFVKVCIVLSYCGQAAWILA), 294–314 (VYLVSLATLAAIIASQALISG), 343–363 (LYIPVINWILFAVTSCTVLYF), 373–393 (YGLAITITMLMTTILLNYYLI), 399–419 (PFLAHLVMTFFALVEFIFFWA), and 424–444 (FMHGGYVVVILALAIVFVMFI).

It belongs to the HAK/KUP transporter (TC 2.A.72) family.

The protein resides in the cell membrane. The enzyme catalyses K(+)(in) + H(+)(in) = K(+)(out) + H(+)(out). Transport of potassium into the cell. Likely operates as a K(+):H(+) symporter. The protein is Probable potassium transport system protein Kup of Streptococcus pyogenes serotype M6 (strain ATCC BAA-946 / MGAS10394).